An 82-amino-acid chain; its full sequence is Small ribosomal subunit protein uS17 (82 aa).

This sequence belongs to the universal ribosomal protein uS17 family. Part of the 30S ribosomal subunit.

Its function is as follows. One of the primary rRNA binding proteins, it binds specifically to the 5'-end of 16S ribosomal RNA. This Paracoccus denitrificans (strain Pd 1222) protein is Small ribosomal subunit protein uS17.